Reading from the N-terminus, the 170-residue chain is TFIIB-type zinc finger protein (170 aa).

A TFIIB-type zinc finger spans residues 1 to 30; sequence MECPVCGSNEIVWDNKNGEVVCSNCGIIID. Residues Cys3, Cys6, Cys22, and Cys25 each coordinate Zn(2+).

The protein belongs to the TFIIB family. Requires Zn(2+) as cofactor.

The protein is TFIIB-type zinc finger protein of Saccharolobus shibatae (strain ATCC 51178 / DSM 5389 / JCM 8931 / NBRC 15437 / B12) (Sulfolobus shibatae).